The chain runs to 573 residues: Mucin-13 (573 aa).

Positions 1 to 17 are cleaved as a signal peptide; it reads MKGFLLLSLSLLLVTVG. A compositionally biased stretch (low complexity) spans 16–234; that stretch reads VGSSSQASST…VPSGGSTGPS (219 aa). A disordered region spans residues 16–237; sequence VGSSSQASST…GGSTGPSDLC (222 aa). At 18–480 the chain is on the extracellular side; that stretch reads SSSQASSTTS…FGYSGMNCKD (463 aa). The EGF-like 1 domain maps to 233–273; it reads PSDLCNPNPCKGTASCVKLHSKHFCLCLEGYYYNSSLSSCV. Cystine bridges form between Cys237/Cys248, Cys242/Cys257, and Cys259/Cys272. N-linked (GlcNAc...) asparagine glycans are attached at residues Asn266, Asn316, and Asn397. One can recognise an SEA domain in the interval 274–391; it reads KGTTFPGDIS…DYVSINLCDH (118 aa). 2 EGF-like domains span residues 385–425 and 425–467; these read SINL…PFCV and VAVT…RKCE. Disulfide bonds link Cys389/Cys402, Cys394/Cys408, Cys410/Cys424, Cys429/Cys441, Cys433/Cys451, and Cys453/Cys466. A helical membrane pass occupies residues 481-508; it reads QFQLILTIVGTIAGALILILLIAFIVSA. Residues 509 to 573 lie on the Cytoplasmic side of the membrane; it reads RSKNKKKDGE…NQRSMPRPDY (65 aa). Residues 548-573 are disordered; sequence PKVRTGVPSQTPNPYANQRSMPRPDY. The segment covering 554–567 has biased composition (polar residues); that stretch reads VPSQTPNPYANQRS.

As to quaternary structure, homodimer of beta subunits. Post-translationally, cleaved into two subunits, alpha and beta, probably between the first EGF domain and the SEA domain. Beta subunit contains the cytoplasmic tail and alpha subunit the extracellular tail. The homooligomerization into dimers is dependent on intrachain disulfide bonds. Highly N-glycosylated.

It is found in the cell membrane. Its subcellular location is the secreted. In terms of biological role, epithelial and hemopoietic transmembrane mucin that may play a role in cell signaling. The chain is Mucin-13 (Muc13) from Mus musculus (Mouse).